Consider the following 643-residue polypeptide: Replication protein E1 (643 aa).

Residues 28-60 form a disordered region; it reads THGQSQVSSDEDEDETETREDLDFIDNRVPGDG. Residues 36-45 are compositionally biased toward acidic residues; that stretch reads SDEDEDETET. The Nuclear localization signal signature appears at 84-86; that stretch reads KRK. Phosphoserine; by host is present on residues S90 and S103. Residues 102 to 111 carry the Nuclear export signal motif; it reads LSPRLDAISL. Residues 119–179 are disordered; sequence KRRLFETEPP…EADLTVHTPQ (61 aa). Residues 157–167 show a composition bias toward basic and acidic residues; the sequence is VDVREEERQGG. The segment at 180-346 is DNA-binding region; that stretch reads SGTDAAGSVL…QTLIGHSMED (167 aa). Residues 445 to 595 form the SF3 helicase domain; it reads VEFVSFLAAF…FPFASPGEPL (151 aa). 471–478 contacts ATP; that stretch reads GPADTGKS. A Glycyl lysine isopeptide (Lys-Gly) (interchain with G-Cter in SUMO) cross-link involves residue K552.

It belongs to the papillomaviridae E1 protein family. In terms of assembly, can form hexamers. Interacts with E2 protein; this interaction increases E1 DNA binding specificity. Interacts with host DNA polymerase subunit POLA2. Interacts with host single stranded DNA-binding protein RPA1. Interacts with host TOP1; this interaction stimulates the enzymatic activity of TOP1. Post-translationally, phosphorylated. Sumoylated.

Its subcellular location is the host nucleus. The enzyme catalyses Couples ATP hydrolysis with the unwinding of duplex DNA by translocating in the 3'-5' direction.. The catalysed reaction is ATP + H2O = ADP + phosphate + H(+). Its function is as follows. ATP-dependent DNA 3'-5' helicase required for initiation of viral DNA replication. It forms a complex with the viral E2 protein. The E1-E2 complex binds to the replication origin which contains binding sites for both proteins. During the initial step, a dimer of E1 interacts with a dimer of protein E2 leading to a complex that binds the viral origin of replication with high specificity. Then, a second dimer of E1 displaces the E2 dimer in an ATP-dependent manner to form the E1 tetramer. Following this, two E1 monomers are added to each half of the site, which results in the formation of two E1 trimers on the viral ori. Subsequently, two hexamers will be created. The double hexamer acts as a bi-directional helicase machinery and unwinds the viral DNA and then recruits the host DNA polymerase to start replication. The protein is Replication protein E1 of Human papillomavirus 57.